A 741-amino-acid polypeptide reads, in one-letter code: ABC transporter D family member 2 (741 aa).

The next 3 helical transmembrane spans lie at 39–59 (GSLG…FSLV), 119–139 (FLSL…SVSI), and 260–280 (VVVM…VSGF). The ABC transmembrane type-1 domain occupies 131–409 (ARTMLSVSIA…LMVALSQAIG (279 aa)). Positions 518–740 (IKFENVSIVS…DDDHLKKPLS (223 aa)) constitute an ABC transporter domain. ATP is bound at residue 551–558 (GPNGSGKS).

This sequence belongs to the ABC transporter superfamily. ABCD family. Peroxisomal fatty acyl CoA transporter (TC 3.A.1.203) subfamily.

The protein localises to the membrane. The protein is ABC transporter D family member 2 (abcD2) of Dictyostelium discoideum (Social amoeba).